Reading from the N-terminus, the 240-residue chain is Glyceraldehyde 3-phosphate phosphatase (240 aa).

Belongs to the HAD-like hydrolase superfamily. Mg(2+) is required as a cofactor.

In terms of biological role, catalyzes the dephosphorylation of D,L-glyceraldehyde 3-phosphate in vitro. This chain is Glyceraldehyde 3-phosphate phosphatase, found in Pyrococcus furiosus (strain ATCC 43587 / DSM 3638 / JCM 8422 / Vc1).